A 71-amino-acid polypeptide reads, in one-letter code: DNA-directed RNA polymerase subunit omega (71 aa).

This sequence belongs to the RNA polymerase subunit omega family. In terms of assembly, the RNAP catalytic core consists of 2 alpha, 1 beta, 1 beta' and 1 omega subunit. When a sigma factor is associated with the core the holoenzyme is formed, which can initiate transcription.

The enzyme catalyses RNA(n) + a ribonucleoside 5'-triphosphate = RNA(n+1) + diphosphate. In terms of biological role, promotes RNA polymerase assembly. Latches the N- and C-terminal regions of the beta' subunit thereby facilitating its interaction with the beta and alpha subunits. This chain is DNA-directed RNA polymerase subunit omega, found in Alkaliphilus oremlandii (strain OhILAs) (Clostridium oremlandii (strain OhILAs)).